The primary structure comprises 140 residues: uncharacterized protein (140 aa).

N-linked (GlcNAc...) asparagine glycosylation is present at Asn-27. Helical transmembrane passes span 45 to 65 (FSLY…GVYA), 76 to 96 (VWIF…TGTV), and 116 to 136 (VPLC…YSMV).

The protein belongs to the TMEM170 family.

It is found in the membrane. This is an uncharacterized protein from Saccharomyces cerevisiae (strain ATCC 204508 / S288c) (Baker's yeast).